A 666-amino-acid polypeptide reads, in one-letter code: MRKINLLDLETTNKIAAGEVIERPFSVVKELVENSIDAGAKNITIEIEDGGQKLIKIIDDGEGIYPIDIKNAFLPHATSKINSIEDIYKISTMGFRGEALASISSVSKTKLKSRVDSYNFGKEIYIEGGKIEYLKDTGCNVGTTIEVSDLFYNVPARLKFLKSARSDSSAISDIVNRFILAHPDISFNLINKGKQSIKSYGTGNLKDSIRCVYNKTISENLINFENHKDIISVYGFIGKPEISRKSRTNQSIFVNKRYVKSKFITAAVENAFKSFLTVNSYPFFVIFIDIFPEYIDVNVHPTKSEVKFKDERAMFKTIFDAVHEAIKGELKESFTNFFNKEDINIYDSEKSIAETIKPGKEEVQIPIDLNSNNKIDIFGNNINKLPNNTELLKNIDIKEKNILENNDNFYTSNQNEIYYTNKNDKCLNSCNKDDYSKIEKPLQKDNKNLDNLYLNEHNTNSSSINIKENKPNNFYVDMKIIGQFNNTYILIEKDKELYIIDQHAAHEKVLFEKFKSEIEKGYVVSQILLSPVVIELSEDEFNIYEENKDIFKNSGFSVEAFGECTINIKEVPLILGKPNVENLFMDILYNLKNMKSKETSTIKYNAIATLACKSAVKANDNLKEEEIKKLIEDMLILNNPYTCPHGRPTMIKFTLKDLEKKFKRIQ.

This sequence belongs to the DNA mismatch repair MutL/HexB family.

Functionally, this protein is involved in the repair of mismatches in DNA. It is required for dam-dependent methyl-directed DNA mismatch repair. May act as a 'molecular matchmaker', a protein that promotes the formation of a stable complex between two or more DNA-binding proteins in an ATP-dependent manner without itself being part of a final effector complex. The protein is DNA mismatch repair protein MutL of Clostridium botulinum (strain 657 / Type Ba4).